Here is a 117-residue protein sequence, read N- to C-terminus: Small ribosomal subunit protein bS6 (117 aa).

A disordered region spans residues 92 to 117; the sequence is KVDEHPEGPSIQMQKREERDNRRERR. Over residues 105–117 the composition is skewed to basic and acidic residues; sequence QKREERDNRRERR.

This sequence belongs to the bacterial ribosomal protein bS6 family.

Functionally, binds together with bS18 to 16S ribosomal RNA. This chain is Small ribosomal subunit protein bS6, found in Dinoroseobacter shibae (strain DSM 16493 / NCIMB 14021 / DFL 12).